Here is a 171-residue protein sequence, read N- to C-terminus: NADH-quinone oxidoreductase subunit I (171 aa).

2 4Fe-4S ferredoxin-type domains span residues 41–71 (LTRDPDGEERCVACNLCSVACPVDCISVVKT) and 81–110 (ESFTINFSRCIMCGFCEEACPTHAIQLTPD). Residues Cys51, Cys54, Cys57, Cys61, Cys90, Cys93, Cys96, and Cys100 each coordinate [4Fe-4S] cluster.

This sequence belongs to the complex I 23 kDa subunit family. In terms of assembly, NDH-1 is composed of 13 different subunits. Subunits NuoA, H, J, K, L, M, N constitute the membrane sector of the complex. [4Fe-4S] cluster is required as a cofactor.

Its subcellular location is the cell inner membrane. It catalyses the reaction a quinone + NADH + 5 H(+)(in) = a quinol + NAD(+) + 4 H(+)(out). In terms of biological role, NDH-1 shuttles electrons from NADH, via FMN and iron-sulfur (Fe-S) centers, to quinones in the respiratory chain. The immediate electron acceptor for the enzyme in this species is believed to be ubiquinone. Couples the redox reaction to proton translocation (for every two electrons transferred, four hydrogen ions are translocated across the cytoplasmic membrane), and thus conserves the redox energy in a proton gradient. The chain is NADH-quinone oxidoreductase subunit I from Shewanella woodyi (strain ATCC 51908 / MS32).